Reading from the N-terminus, the 152-residue chain is Maintenance of carboxysome distribution protein B (152 aa).

As to quaternary structure, self-associates, interacts with McdA probably via the C-terminus of both proteins. Homohexamerizes. Probably a trimer of dimers. Interacts with most of the shell components of the carboxysome (CcmK2, CcmK3, CcmK4, CcmL and CcmO, but not CcmP) via its C-terminus.

Its subcellular location is the carboxysome. In terms of biological role, mcdA and McdB together mediate carboxysome (Cb) spacing, size, ultrastructure and probably inheritance in the cell. Together they prevent Cb aggregation. McdA is an ATPase that forms dynamic gradients on the nucleoid in response to adapter protein McdB, which associates with carboxysomes. The interplay between McdA gradients on the nucleoid and McdB-bound carboxysomes result in the equal spacing of Cbs along the cell length. McdB may have an additional function in cell divison. Stimulates the ATPase activity of McdA, causing McdA to be released from DNA. Overexpression leads to loss of McdA oscillation and formation of large Cb aggregates which colocalize with McdB, as well as diffuse McdB staining in the cytoplasm. Undergoes liquid-liquid phase separation between pH 6.5-7.5 and at concentrations between 1 uM and 167 uM. Forms polar foci upon overexpression in E.coli. Functionally, incorrect positioning (aggregation) of carboxysomes results in reduced CO(2) fixation by encapsulated RuBisCO, which leads to slower growth, cell elongation, asymmetric cell division and an increase in RuBisCO levels. The polypeptide is Maintenance of carboxysome distribution protein B (Synechococcus elongatus (strain ATCC 33912 / PCC 7942 / FACHB-805) (Anacystis nidulans R2)).